Reading from the N-terminus, the 184-residue chain is ATP synthase subunit b 1 (184 aa).

A helical transmembrane segment spans residues 4–24 (LSILAVLAASPAMAATGPFLS).

This sequence belongs to the ATPase B chain family. In terms of assembly, F-type ATPases have 2 components, F(1) - the catalytic core - and F(0) - the membrane proton channel. F(1) has five subunits: alpha(3), beta(3), gamma(1), delta(1), epsilon(1). F(0) has three main subunits: a(1), b(2) and c(10-14). The alpha and beta chains form an alternating ring which encloses part of the gamma chain. F(1) is attached to F(0) by a central stalk formed by the gamma and epsilon chains, while a peripheral stalk is formed by the delta and b chains.

It is found in the cell inner membrane. Its function is as follows. F(1)F(0) ATP synthase produces ATP from ADP in the presence of a proton or sodium gradient. F-type ATPases consist of two structural domains, F(1) containing the extramembraneous catalytic core and F(0) containing the membrane proton channel, linked together by a central stalk and a peripheral stalk. During catalysis, ATP synthesis in the catalytic domain of F(1) is coupled via a rotary mechanism of the central stalk subunits to proton translocation. Component of the F(0) channel, it forms part of the peripheral stalk, linking F(1) to F(0). In Cereibacter sphaeroides (strain ATCC 17023 / DSM 158 / JCM 6121 / CCUG 31486 / LMG 2827 / NBRC 12203 / NCIMB 8253 / ATH 2.4.1.) (Rhodobacter sphaeroides), this protein is ATP synthase subunit b 1.